The primary structure comprises 118 residues: Hisactophilin-1 (118 aa).

G2 carries the N-myristoyl glycine lipid modification. The tract at residues S8–H109 is contains several HHXH repeats. Tandem repeats lie at residues F34–K46 and F74–K86. Residues F34–K86 are 2 X 13 AA approximate repeats.

The protein belongs to the hisactophilin family. Homodimer or heterodimer of hatA and hatB, linked by a disulfide bond. In terms of processing, phosphorylated.

It localises to the cytoplasm. It is found in the cell membrane. In terms of biological role, may act as an intracellular pH sensor that links chemotactic signals to responses in the microfilament system of the cells by nucleating actin polymerization or stabilizing the filaments. This is Hisactophilin-1 (hatA) from Dictyostelium discoideum (Social amoeba).